We begin with the raw amino-acid sequence, 145 residues long: Large ribosomal subunit protein mL59 (145 aa).

Over residues 123-135 (LKKTSKFKNERQK) the composition is skewed to basic and acidic residues. The interval 123 to 145 (LKKTSKFKNERQKASKIAKPSPF) is disordered.

It belongs to the mitochondrion-specific ribosomal protein mL59 family. In terms of assembly, component of the mitochondrial large ribosomal subunit (mt-LSU). Mature yeast 74S mitochondrial ribosomes consist of a small (37S) and a large (54S) subunit. The 37S small subunit contains a 15S ribosomal RNA (15S mt-rRNA) and at least 32 different proteins. The 54S large subunit contains a 21S rRNA (21S mt-rRNA) and at least 45 different proteins.

It is found in the mitochondrion. In terms of biological role, component of the mitochondrial ribosome (mitoribosome), a dedicated translation machinery responsible for the synthesis of mitochondrial genome-encoded proteins, including at least some of the essential transmembrane subunits of the mitochondrial respiratory chain. The mitoribosomes are attached to the mitochondrial inner membrane and translation products are cotranslationally integrated into the membrane. This chain is Large ribosomal subunit protein mL59 (mrpl25), found in Schizosaccharomyces pombe (strain 972 / ATCC 24843) (Fission yeast).